The chain runs to 94 residues: Phormicin (94 aa).

An N-terminal signal peptide occupies residues 1–23 (MKFFMVFVVTFCLAVCFVSQSLA). A propeptide spanning residues 24–54 (IPADAANDAHFVDGVQALKEIEPELHGRYKR) is cleaved from the precursor. Intrachain disulfides connect C57–C84, C70–C90, and C74–C92.

The protein belongs to the invertebrate defensin family. Type 1 subfamily.

It is found in the secreted. In terms of biological role, responsible for the anti Gram-positive activity of immune hemolymph of P.terraenovae. This is Phormicin from Protophormia terraenovae (Northern blowfly).